Consider the following 374-residue polypeptide: Chaperone protein DnaJ (374 aa).

The J domain occupies 5–70; sequence DYYEILGVSR…QKRAAYDQYG (66 aa). Residues 129 to 207 form a CR-type zinc finger; the sequence is GVTREIRIPT…CHGHGRVEKS (79 aa). Residues Cys142, Cys145, Cys159, Cys162, Cys181, Cys184, Cys195, and Cys198 each coordinate Zn(2+). 4 CXXCXGXG motif repeats span residues 142–149, 159–166, 181–188, and 195–202; these read CDVCHGSG, CPTCHGQG, CPTCQGQG, and CTKCHGHG.

The protein belongs to the DnaJ family. As to quaternary structure, homodimer. It depends on Zn(2+) as a cofactor.

The protein localises to the cytoplasm. Its function is as follows. Participates actively in the response to hyperosmotic and heat shock by preventing the aggregation of stress-denatured proteins and by disaggregating proteins, also in an autonomous, DnaK-independent fashion. Unfolded proteins bind initially to DnaJ; upon interaction with the DnaJ-bound protein, DnaK hydrolyzes its bound ATP, resulting in the formation of a stable complex. GrpE releases ADP from DnaK; ATP binding to DnaK triggers the release of the substrate protein, thus completing the reaction cycle. Several rounds of ATP-dependent interactions between DnaJ, DnaK and GrpE are required for fully efficient folding. Also involved, together with DnaK and GrpE, in the DNA replication of plasmids through activation of initiation proteins. The chain is Chaperone protein DnaJ from Sodalis glossinidius (strain morsitans).